A 350-amino-acid chain; its full sequence is Uroporphyrinogen decarboxylase (350 aa).

Residues 27 to 31 (RQAGR), Phe-46, Asp-76, Tyr-152, Ser-207, and His-321 contribute to the substrate site.

The protein belongs to the uroporphyrinogen decarboxylase family. As to quaternary structure, homodimer.

Its subcellular location is the cytoplasm. The enzyme catalyses uroporphyrinogen III + 4 H(+) = coproporphyrinogen III + 4 CO2. It functions in the pathway porphyrin-containing compound metabolism; protoporphyrin-IX biosynthesis; coproporphyrinogen-III from 5-aminolevulinate: step 4/4. Functionally, catalyzes the decarboxylation of four acetate groups of uroporphyrinogen-III to yield coproporphyrinogen-III. The sequence is that of Uroporphyrinogen decarboxylase from Listeria welshimeri serovar 6b (strain ATCC 35897 / DSM 20650 / CCUG 15529 / CIP 8149 / NCTC 11857 / SLCC 5334 / V8).